We begin with the raw amino-acid sequence, 23 residues long: Cardioactive peptide CAP23 (23 aa).

Cys7 and Cys19 are oxidised to a cystine.

The protein belongs to the GBP/PSP1/paralytic peptide family.

Has excitatory effects on a semi-isolated heart from larval Manduca sexta, causing an inotropic effect at low concentrations of peptide and chronotropic and inotropic effects at high doses. The sequence is that of Cardioactive peptide CAP23 from Spodoptera eridania (Southern armyworm).